A 262-amino-acid polypeptide reads, in one-letter code: Chemotaxis protein methyltransferase (262 aa).

A CheR-type methyltransferase domain is found at 1–262 (MEKKITPSEL…SPRGVYYEKV (262 aa)). Residues Thr76, Arg80, Glu111, Asp133, 188–189 (NV), and 206–207 (RN) each bind S-adenosyl-L-methionine.

The catalysed reaction is L-glutamyl-[protein] + S-adenosyl-L-methionine = [protein]-L-glutamate 5-O-methyl ester + S-adenosyl-L-homocysteine. Methylation of the membrane-bound methyl-accepting chemotaxis proteins (MCP) to form gamma-glutamyl methyl ester residues in MCP. This is Chemotaxis protein methyltransferase (cheR) from Campylobacter jejuni subsp. jejuni serotype O:2 (strain ATCC 700819 / NCTC 11168).